Reading from the N-terminus, the 504-residue chain is Maturase K (504 aa).

Belongs to the intron maturase 2 family. MatK subfamily.

Its subcellular location is the plastid. It is found in the chloroplast. Usually encoded in the trnK tRNA gene intron. Probably assists in splicing its own and other chloroplast group II introns. The chain is Maturase K from Wollastonia biflora (Beach sunflower).